Reading from the N-terminus, the 274-residue chain is MTQQLEQIIDQAWENRADFSPKNAPADLRNAVAQVIAQLNEGTLRVAQKDSGAWVVNQWVKKAVLLSFRLEDNIAMPSGEYMQFYDKVPTKFANYTAEDFAKGGFRVVPPAVARHGSFIGKNVVMMPSFVNIGAYVDEGSMVDAWATVGSCAQIGKNVHLSGGVGIGGVLEPMQANPTIIEDNCFIGARSEIVEGVIVEENSVISMGVYIGQSTKIYDRATGEVTYGRIPAGSVVVSGNLPSADGKYSLYCAVIVKRVDAKTRAKTGINELLRD.

Residues R106 and D143 each contribute to the substrate site.

The protein belongs to the transferase hexapeptide repeat family. In terms of assembly, homotrimer.

It localises to the cytoplasm. The enzyme catalyses (S)-2,3,4,5-tetrahydrodipicolinate + succinyl-CoA + H2O = (S)-2-succinylamino-6-oxoheptanedioate + CoA. The protein operates within amino-acid biosynthesis; L-lysine biosynthesis via DAP pathway; LL-2,6-diaminopimelate from (S)-tetrahydrodipicolinate (succinylase route): step 1/3. In Herminiimonas arsenicoxydans, this protein is 2,3,4,5-tetrahydropyridine-2,6-dicarboxylate N-succinyltransferase.